Consider the following 313-residue polypeptide: Acetyl-coenzyme A carboxylase carboxyl transferase subunit alpha (313 aa).

One can recognise a CoA carboxyltransferase C-terminal domain in the interval 42–292 (KSDKLLRDTY…GAAIGEELDK (251 aa)).

Belongs to the AccA family. In terms of assembly, acetyl-CoA carboxylase is a heterohexamer composed of biotin carboxyl carrier protein (AccB), biotin carboxylase (AccC) and two subunits each of ACCase subunit alpha (AccA) and ACCase subunit beta (AccD).

The protein resides in the cytoplasm. The catalysed reaction is N(6)-carboxybiotinyl-L-lysyl-[protein] + acetyl-CoA = N(6)-biotinyl-L-lysyl-[protein] + malonyl-CoA. The protein operates within lipid metabolism; malonyl-CoA biosynthesis; malonyl-CoA from acetyl-CoA: step 1/1. In terms of biological role, component of the acetyl coenzyme A carboxylase (ACC) complex. First, biotin carboxylase catalyzes the carboxylation of biotin on its carrier protein (BCCP) and then the CO(2) group is transferred by the carboxyltransferase to acetyl-CoA to form malonyl-CoA. The protein is Acetyl-coenzyme A carboxylase carboxyl transferase subunit alpha of Rhizorhabdus wittichii (strain DSM 6014 / CCUG 31198 / JCM 15750 / NBRC 105917 / EY 4224 / RW1) (Sphingomonas wittichii).